The primary structure comprises 291 residues: Co-chaperone protein DjlA (291 aa).

Residues 1–6 (MRYWGK) lie on the Periplasmic side of the membrane. The chain crosses the membrane as a helical span at residues 7–31 (LLGLALGIVSSTGIWGMIMGLLMGH). Residues 32–291 (WIDRARASRR…ELLKSANQTK (260 aa)) lie on the Cytoplasmic side of the membrane. The segment at 177–223 (ESPTGQQSRQNQSRQNGKSQQRRNNGYSNGHSYGGQRPPSPLRGPTV) is disordered. The segment covering 181–211 (GQQSRQNQSRQNGKSQQRRNNGYSNGHSYGG) has biased composition (low complexity). Positions 225–291 (SACRTLGVRS…ELLKSANQTK (67 aa)) constitute a J domain.

In terms of assembly, homodimer.

The protein resides in the cell inner membrane. Regulatory DnaK co-chaperone. Direct interaction between DnaK and DjlA is needed for the induction of the wcaABCDE operon, involved in the synthesis of a colanic acid polysaccharide capsule, possibly through activation of the RcsB/RcsC phosphotransfer signaling pathway. The colanic acid capsule may help the bacterium survive conditions outside the host. The protein is Co-chaperone protein DjlA of Pectobacterium atrosepticum (strain SCRI 1043 / ATCC BAA-672) (Erwinia carotovora subsp. atroseptica).